A 66-amino-acid polypeptide reads, in one-letter code: Large ribosomal subunit protein bL33c (66 aa).

Belongs to the bacterial ribosomal protein bL33 family.

Its subcellular location is the plastid. It is found in the chloroplast. The chain is Large ribosomal subunit protein bL33c from Crucihimalaya wallichii (Rock-cress).